Reading from the N-terminus, the 414-residue chain is Serine hydroxymethyltransferase (414 aa).

Residues L121 and G125 to L127 each bind (6S)-5,6,7,8-tetrahydrofolate. An N6-(pyridoxal phosphate)lysine modification is found at K229.

The protein belongs to the SHMT family. In terms of assembly, homodimer. Pyridoxal 5'-phosphate is required as a cofactor.

Its subcellular location is the cytoplasm. It carries out the reaction (6R)-5,10-methylene-5,6,7,8-tetrahydrofolate + glycine + H2O = (6S)-5,6,7,8-tetrahydrofolate + L-serine. It functions in the pathway one-carbon metabolism; tetrahydrofolate interconversion. The protein operates within amino-acid biosynthesis; glycine biosynthesis; glycine from L-serine: step 1/1. Functionally, catalyzes the reversible interconversion of serine and glycine with tetrahydrofolate (THF) serving as the one-carbon carrier. This reaction serves as the major source of one-carbon groups required for the biosynthesis of purines, thymidylate, methionine, and other important biomolecules. Also exhibits THF-independent aldolase activity toward beta-hydroxyamino acids, producing glycine and aldehydes, via a retro-aldol mechanism. The chain is Serine hydroxymethyltransferase from Polynucleobacter necessarius subsp. necessarius (strain STIR1).